The chain runs to 414 residues: Esterase FrsA (414 aa).

This sequence belongs to the FrsA family.

It catalyses the reaction a carboxylic ester + H2O = an alcohol + a carboxylate + H(+). Catalyzes the hydrolysis of esters. The protein is Esterase FrsA of Shigella flexneri serotype 5b (strain 8401).